The following is a 154-amino-acid chain: 3-hydroxyacyl-[acyl-carrier-protein] dehydratase FabZ (154 aa).

Residue H55 is part of the active site.

It belongs to the thioester dehydratase family. FabZ subfamily.

The protein resides in the cytoplasm. It catalyses the reaction a (3R)-hydroxyacyl-[ACP] = a (2E)-enoyl-[ACP] + H2O. Its function is as follows. Involved in unsaturated fatty acids biosynthesis. Catalyzes the dehydration of short chain beta-hydroxyacyl-ACPs and long chain saturated and unsaturated beta-hydroxyacyl-ACPs. The protein is 3-hydroxyacyl-[acyl-carrier-protein] dehydratase FabZ of Oleidesulfovibrio alaskensis (strain ATCC BAA-1058 / DSM 17464 / G20) (Desulfovibrio alaskensis).